Here is a 170-residue protein sequence, read N- to C-terminus: tRNA-splicing endonuclease (170 aa).

Active-site residues include tyrosine 110, histidine 116, and lysine 147.

This sequence belongs to the tRNA-intron endonuclease family. Archaeal short subfamily. Homotetramer; although the tetramer contains four active sites, only two participate in the cleavage. Therefore, it should be considered as a dimer of dimers.

It catalyses the reaction pretRNA = a 3'-half-tRNA molecule with a 5'-OH end + a 5'-half-tRNA molecule with a 2',3'-cyclic phosphate end + an intron with a 2',3'-cyclic phosphate and a 5'-hydroxyl terminus.. Its function is as follows. Endonuclease that removes tRNA introns. Cleaves pre-tRNA at the 5'- and 3'-splice sites to release the intron. The products are an intron and two tRNA half-molecules bearing 2',3' cyclic phosphate and 5'-OH termini. Recognizes a pseudosymmetric substrate in which 2 bulged loops of 3 bases are separated by a stem of 4 bp. In Pyrococcus abyssi (strain GE5 / Orsay), this protein is tRNA-splicing endonuclease.